Reading from the N-terminus, the 208-residue chain is MNRKQIAKGKLVRRFGINIFEQPKYDKILKKKPHPPGMHGKARKAKITEYGKQLIEKQKIKFTYGVSERQLPNTFKEAKKHHGVTGYNLLSILETIIDNIVYRAGFAFSRAHARLIVSHGIVILNGRRVTIPSIILRANDQILIQEIDSLKKLIGSNIEQTSAQRNLPTGIELNADYLNIKVKHAPSRDEIPTLANEQMVVEYYSKRA.

In terms of domain architecture, S4 RNA-binding spans 95–159; the sequence is TIIDNIVYRA…LKKLIGSNIE (65 aa).

This sequence belongs to the universal ribosomal protein uS4 family. In terms of assembly, part of the 30S ribosomal subunit. Contacts protein S5. The interaction surface between S4 and S5 is involved in control of translational fidelity.

Functionally, one of the primary rRNA binding proteins, it binds directly to 16S rRNA where it nucleates assembly of the body of the 30S subunit. Its function is as follows. With S5 and S12 plays an important role in translational accuracy. This is Small ribosomal subunit protein uS4 from Borreliella afzelii (strain PKo) (Borrelia afzelii).